Here is a 478-residue protein sequence, read N- to C-terminus: NAD-dependent malic enzyme (478 aa).

In terms of domain architecture, ACT spans 12-86; it reads TIRLQFEKDI…GVKIVNVSDR (75 aa). Tyr-114 functions as the Proton donor in the catalytic mechanism. Lys-169 functions as the Proton acceptor in the catalytic mechanism. A divalent metal cation contacts are provided by Glu-211, Asp-212, and Asp-237. NAD(+)-binding positions include 270–273, Asn-363, and Asn-393; that span reads IGAA.

The protein belongs to the malic enzymes family. In terms of assembly, homotetramer. Requires Mg(2+) as cofactor. Mn(2+) serves as cofactor.

It carries out the reaction (S)-malate + NAD(+) = pyruvate + CO2 + NADH. The enzyme catalyses oxaloacetate + H(+) = pyruvate + CO2. The activity is enhanced 5-7 times by ammonium and potassium. Its function is as follows. In addition to the NAD-dependent oxidative decarboxylation of L-malate, the enzyme catalyzes the decarboxylation of oxaloacetate. In Geobacillus stearothermophilus (Bacillus stearothermophilus), this protein is NAD-dependent malic enzyme.